The chain runs to 110 residues: Large ribosomal subunit protein uL22 (110 aa).

This sequence belongs to the universal ribosomal protein uL22 family. In terms of assembly, part of the 50S ribosomal subunit.

Its function is as follows. This protein binds specifically to 23S rRNA; its binding is stimulated by other ribosomal proteins, e.g. L4, L17, and L20. It is important during the early stages of 50S assembly. It makes multiple contacts with different domains of the 23S rRNA in the assembled 50S subunit and ribosome. The globular domain of the protein is located near the polypeptide exit tunnel on the outside of the subunit, while an extended beta-hairpin is found that lines the wall of the exit tunnel in the center of the 70S ribosome. This Salmonella arizonae (strain ATCC BAA-731 / CDC346-86 / RSK2980) protein is Large ribosomal subunit protein uL22.